The chain runs to 536 residues: ATP synthase subunit beta (536 aa).

Residues 1–57 (MVKAVSSSKGAAKVEQKKSAARSGVKKNASKSQASLQDTSSPLKTSSKNAHAKKDVQ) form a disordered region. The span at 30–49 (SKSQASLQDTSSPLKTSSKN) shows a compositional bias: polar residues. 208–215 (GGAGVGKT) is an ATP binding site.

The protein belongs to the ATPase alpha/beta chains family. F-type ATPases have 2 components, CF(1) - the catalytic core - and CF(0) - the membrane proton channel. CF(1) has five subunits: alpha(3), beta(3), gamma(1), delta(1), epsilon(1). CF(0) has three main subunits: a(1), b(2) and c(9-12). The alpha and beta chains form an alternating ring which encloses part of the gamma chain. CF(1) is attached to CF(0) by a central stalk formed by the gamma and epsilon chains, while a peripheral stalk is formed by the delta and b chains.

It is found in the cell inner membrane. It catalyses the reaction ATP + H2O + 4 H(+)(in) = ADP + phosphate + 5 H(+)(out). Functionally, produces ATP from ADP in the presence of a proton gradient across the membrane. The catalytic sites are hosted primarily by the beta subunits. The polypeptide is ATP synthase subunit beta (Bartonella quintana (strain Toulouse) (Rochalimaea quintana)).